A 194-amino-acid chain; its full sequence is dTTP/UTP pyrophosphatase (194 aa).

Asp73 serves as the catalytic Proton acceptor.

This sequence belongs to the Maf family. YhdE subfamily. The cofactor is a divalent metal cation.

It is found in the cytoplasm. It carries out the reaction dTTP + H2O = dTMP + diphosphate + H(+). The catalysed reaction is UTP + H2O = UMP + diphosphate + H(+). Its function is as follows. Nucleoside triphosphate pyrophosphatase that hydrolyzes dTTP and UTP. May have a dual role in cell division arrest and in preventing the incorporation of modified nucleotides into cellular nucleic acids. The chain is dTTP/UTP pyrophosphatase from Clostridium botulinum (strain 657 / Type Ba4).